A 173-amino-acid polypeptide reads, in one-letter code: Eggshell protein (173 aa).

An N-terminal signal peptide occupies residues 1-18 (MKQSLTLVFLVAIGYATA). Positions 145-162 (GSGKGKGGGKGGKGGKGG) are enriched in gly residues. The interval 145–173 (GSGKGKGGGKGGKGGKGGTYKPSHYGGGY) is disordered.

The protein is Eggshell protein of Schistosoma mansoni (Blood fluke).